The primary structure comprises 64 residues: Prokaryotic ubiquitin-like protein Pup (64 aa).

Basic and acidic residues-rich tracts occupy residues 1–11 and 25–34; these read MAQEQTKRTGG and GQERREKLAE. The segment at 1–38 is disordered; the sequence is MAQEQTKRTGGGDEDEGSAGPEAAGQERREKLAEDTDD. The interval 21–58 is ARC ATPase binding; it reads PEAAGQERREKLAEDTDDLLDEIDDVLEENAEDFVRAY. The stretch at 24–52 forms a coiled coil; sequence AGQERREKLAEDTDDLLDEIDDVLEENAE. Position 64 is a deamidated glutamine (Gln-64). An Isoglutamyl lysine isopeptide (Gln-Lys) (interchain with K-? in acceptor proteins) cross-link involves residue Gln-64.

This sequence belongs to the prokaryotic ubiquitin-like protein family. Strongly interacts with the proteasome-associated ATPase ARC through a hydrophobic interface; the interacting region of Pup lies in its C-terminal half. There is one Pup binding site per ARC hexamer ring. In terms of processing, is modified by deamidation of its C-terminal glutamine to glutamate by the deamidase Dop, a prerequisite to the subsequent pupylation process.

Its pathway is protein degradation; proteasomal Pup-dependent pathway. Protein modifier that is covalently attached to lysine residues of substrate proteins, thereby targeting them for proteasomal degradation. The tagging system is termed pupylation. The sequence is that of Prokaryotic ubiquitin-like protein Pup from Nocardia farcinica (strain IFM 10152).